Consider the following 614-residue polypeptide: Methionine--tRNA ligase (614 aa).

Positions 11-21 (PYTNGPRHIGH) match the 'HIGH' region motif. Residues cysteine 143, cysteine 146, cysteine 156, and cysteine 159 each coordinate Zn(2+). Positions 359–363 (QFSTS) match the 'KMSKS' region motif. Threonine 362 contributes to the ATP binding site.

This sequence belongs to the class-I aminoacyl-tRNA synthetase family. MetG type 1 subfamily. Monomer. Zn(2+) serves as cofactor.

The protein localises to the cytoplasm. The enzyme catalyses tRNA(Met) + L-methionine + ATP = L-methionyl-tRNA(Met) + AMP + diphosphate. Is required not only for elongation of protein synthesis but also for the initiation of all mRNA translation through initiator tRNA(fMet) aminoacylation. The chain is Methionine--tRNA ligase from Beutenbergia cavernae (strain ATCC BAA-8 / DSM 12333 / CCUG 43141 / JCM 11478 / NBRC 16432 / NCIMB 13614 / HKI 0122).